A 239-amino-acid chain; its full sequence is Phosphothreonine lyase OspF (239 aa).

Histidine 104 acts as the Proton donor in catalysis. The Proton acceptor role is filled by lysine 134.

This sequence belongs to the phosphothreonine lyase family.

Its subcellular location is the secreted. Inhibited by the tyrosine phosphatase inhibitor vanadate. Its function is as follows. Catalyzes the removal of the phosphate group from the phosphothreonine in the mitogen-activated protein kinases such as MAPK2/ERK2, MAPK3/ERK1, MAPK8 and MAPK14 in an irreversible reaction, thus preventing the downstream phosphorylation of histone H3. This epigenetic modification results in inhibition of the transcription of a specific subset of pro-inflammatory genes, and ultimately to a reduced immune response against the invading pathogen. The diminished immune response enhances the bacterium's ability to disseminate and multiply within the host. The polypeptide is Phosphothreonine lyase OspF (ospF) (Shigella flexneri).